Consider the following 488-residue polypeptide: Katanin p60 ATPase-containing subunit A-like 1 (488 aa).

Residues 84–184 (FPNPVPEEGP…EQKKFDGTGY (101 aa)) are disordered. Residues 144-167 (KPDRPNTRDGRGNKAKEEKSKRNA) are compositionally biased toward basic and acidic residues. Position 246-253 (246-253 (GPPGTGKT)) interacts with ATP.

Belongs to the AAA ATPase family. Katanin p60 subunit A1 subfamily. A-like 1 sub-subfamily.

The protein localises to the cytoplasm. It is found in the cytoskeleton. It localises to the spindle pole. The protein resides in the spindle. The catalysed reaction is n ATP + n H2O + a microtubule = n ADP + n phosphate + (n+1) alpha/beta tubulin heterodimers.. In terms of biological role, regulates microtubule dynamics in Sertoli cells, a process that is essential for spermiogenesis and male fertility. Severs microtubules in an ATP-dependent manner, promoting rapid reorganization of cellular microtubule arrays. In Danio rerio (Zebrafish), this protein is Katanin p60 ATPase-containing subunit A-like 1 (katnal1).